A 148-amino-acid polypeptide reads, in one-letter code: Large ribosomal subunit protein bL9 (148 aa).

This sequence belongs to the bacterial ribosomal protein bL9 family.

Its function is as follows. Binds to the 23S rRNA. This Clostridium beijerinckii (strain ATCC 51743 / NCIMB 8052) (Clostridium acetobutylicum) protein is Large ribosomal subunit protein bL9.